A 174-amino-acid polypeptide reads, in one-letter code: Gamma-crystallin D (174 aa).

2 consecutive Beta/gamma crystallin 'Greek key' domains span residues 2-40 (GKIT…RVDS) and 41-83 (GCWM…RLIP). The segment at 84 to 87 (HAGS) is connecting peptide. 2 consecutive Beta/gamma crystallin 'Greek key' domains span residues 88–128 (HRLR…NVLE) and 129–171 (GSWV…RRVI).

The protein belongs to the beta/gamma-crystallin family.

Functionally, crystallins are the dominant structural components of the vertebrate eye lens. The sequence is that of Gamma-crystallin D (CRYGD) from Bos taurus (Bovine).